The primary structure comprises 242 residues: DNA repair protein RecO (242 aa).

This sequence belongs to the RecO family.

Involved in DNA repair and RecF pathway recombination. This chain is DNA repair protein RecO, found in Laribacter hongkongensis (strain HLHK9).